The chain runs to 569 residues: Glutamate--tRNA ligase (569 aa).

The 'HIGH' region signature appears at 99 to 109; the sequence is PEPNGYPTLGH.

This sequence belongs to the class-I aminoacyl-tRNA synthetase family. Glutamate--tRNA ligase type 2 subfamily.

The protein localises to the cytoplasm. It carries out the reaction tRNA(Glu) + L-glutamate + ATP = L-glutamyl-tRNA(Glu) + AMP + diphosphate. Its function is as follows. Catalyzes the attachment of glutamate to tRNA(Glu) in a two-step reaction: glutamate is first activated by ATP to form Glu-AMP and then transferred to the acceptor end of tRNA(Glu). The protein is Glutamate--tRNA ligase of Korarchaeum cryptofilum (strain OPF8).